A 433-amino-acid chain; its full sequence is Mannan endo-1,4-beta-mannosidase 2 (433 aa).

The first 28 residues, 1–28 (MAAPTGNGPVIPILGFLTCVAFIYLSFG), serve as a signal peptide directing secretion. An N-linked (GlcNAc...) asparagine glycan is attached at Asn-46. Trp-98 contributes to the substrate binding site. Asn-169 is a glycosylation site (N-linked (GlcNAc...) asparagine). Asn-214 serves as a coordination point for substrate. The Proton donor role is filled by Glu-215. Tyr-295 serves as a coordination point for substrate. Glu-335 acts as the Nucleophile in catalysis. Residue Trp-377 coordinates substrate.

Belongs to the glycosyl hydrolase 5 (cellulase A) family. As to expression, expressed in roots, stems, leaves and seeds.

Its subcellular location is the secreted. The catalysed reaction is Random hydrolysis of (1-&gt;4)-beta-D-mannosidic linkages in mannans, galactomannans and glucomannans.. This chain is Mannan endo-1,4-beta-mannosidase 2 (MAN2), found in Arabidopsis thaliana (Mouse-ear cress).